The sequence spans 238 residues: Small ribosomal subunit protein eS4 (238 aa).

An S4 RNA-binding domain is found at 38-101 (LPLALIIRDV…GEVYRVVPDA (64 aa)).

This sequence belongs to the eukaryotic ribosomal protein eS4 family.

This is Small ribosomal subunit protein eS4 from Pyrobaculum aerophilum (strain ATCC 51768 / DSM 7523 / JCM 9630 / CIP 104966 / NBRC 100827 / IM2).